The following is a 940-amino-acid chain: Phosphoenolpyruvate carboxylase (940 aa).

Active-site residues include H138 and K603.

It belongs to the PEPCase type 1 family. Mg(2+) serves as cofactor.

It catalyses the reaction oxaloacetate + phosphate = phosphoenolpyruvate + hydrogencarbonate. Forms oxaloacetate, a four-carbon dicarboxylic acid source for the tricarboxylic acid cycle. The sequence is that of Phosphoenolpyruvate carboxylase from Streptococcus thermophilus (strain CNRZ 1066).